The primary structure comprises 305 residues: Oxygen-dependent coproporphyrinogen-III oxidase (305 aa).

A substrate-binding site is contributed by Ser-93. The a divalent metal cation site is built by His-97 and His-107. His-107 functions as the Proton donor in the catalytic mechanism. Position 109-111 (109-111 (NVR)) interacts with substrate. A divalent metal cation is bound by residues His-146 and His-176. Residues 241 to 276 (YVEFNLVFDRGTLFGLQSGGRTESILMSLPPQVRWG) form an important for dimerization region. 259 to 261 (GGR) provides a ligand contact to substrate.

Belongs to the aerobic coproporphyrinogen-III oxidase family. Homodimer. Requires a divalent metal cation as cofactor.

It is found in the cytoplasm. It catalyses the reaction coproporphyrinogen III + O2 + 2 H(+) = protoporphyrinogen IX + 2 CO2 + 2 H2O. It functions in the pathway porphyrin-containing compound metabolism; protoporphyrin-IX biosynthesis; protoporphyrinogen-IX from coproporphyrinogen-III (O2 route): step 1/1. Involved in the heme biosynthesis. Catalyzes the aerobic oxidative decarboxylation of propionate groups of rings A and B of coproporphyrinogen-III to yield the vinyl groups in protoporphyrinogen-IX. This is Oxygen-dependent coproporphyrinogen-III oxidase from Pseudomonas aeruginosa (strain UCBPP-PA14).